Reading from the N-terminus, the 539-residue chain is Phosphoenolpyruvate carboxykinase (ATP) (539 aa).

Residues R64, Y206, and K212 each contribute to the substrate site. ATP is bound by residues K212, H231, and 247 to 255; that span reads GLSGTGKTT. Residues K212 and H231 each coordinate Mn(2+). A Mn(2+)-binding site is contributed by D268. Residues E296, R332, 448-449, and T454 each bind ATP; that span reads RI. Residue R332 participates in substrate binding.

Belongs to the phosphoenolpyruvate carboxykinase (ATP) family. As to quaternary structure, monomer. The cofactor is Mn(2+).

It is found in the cytoplasm. It catalyses the reaction oxaloacetate + ATP = phosphoenolpyruvate + ADP + CO2. It functions in the pathway carbohydrate biosynthesis; gluconeogenesis. Its function is as follows. Involved in the gluconeogenesis. Catalyzes the conversion of oxaloacetate (OAA) to phosphoenolpyruvate (PEP) through direct phosphoryl transfer between the nucleoside triphosphate and OAA. In Salmonella gallinarum (strain 287/91 / NCTC 13346), this protein is Phosphoenolpyruvate carboxykinase (ATP).